The primary structure comprises 452 residues: Retinoid-inducible serine carboxypeptidase (452 aa).

The first 28 residues, 1–28 (MELSRRICLVRLWLLLLSFLLGFSAGSA), serve as a signal peptide directing secretion. N-linked (GlcNAc...) asparagine glycosylation is found at Asn64, Asn102, and Asn126. Ser167 is an active-site residue. Residues Asn192 and Asn362 are each glycosylated (N-linked (GlcNAc...) asparagine). Active-site residues include Asp371 and His431.

This sequence belongs to the peptidase S10 family.

It is found in the secreted. In terms of biological role, may be involved in vascular wall and kidney homeostasis. In Mus musculus (Mouse), this protein is Retinoid-inducible serine carboxypeptidase (Scpep1).